The chain runs to 177 residues: Nucleoside triphosphate/diphosphate phosphatase (177 aa).

Arg23 acts as the Proton donor in catalysis. Asn87, Asp103, Asp105, Asp107, Asp120, and Glu123 together coordinate Mg(2+).

Belongs to the Ntdp family. Mg(2+) serves as cofactor.

The catalysed reaction is a ribonucleoside 5'-triphosphate + H2O = a ribonucleoside 5'-diphosphate + phosphate + H(+). It carries out the reaction a ribonucleoside 5'-diphosphate + H2O = a ribonucleoside 5'-phosphate + phosphate + H(+). Its function is as follows. Has nucleoside phosphatase activity towards nucleoside triphosphates and nucleoside diphosphates. This is Nucleoside triphosphate/diphosphate phosphatase from Streptococcus equi subsp. zooepidemicus (strain MGCS10565).